The following is an 879-amino-acid chain: Beta-mannosidase (879 aa).

The first 17 residues, 1–17 (MLLRLLLLLAPCGAGFA), serve as a signal peptide directing secretion. Residues asparagine 35 and asparagine 77 are each glycosylated (N-linked (GlcNAc...) asparagine). Residues cysteine 167 and cysteine 176 are joined by a disulfide bond. 190-192 (WDW) lines the substrate pocket. N-linked (GlcNAc...) asparagine glycosylation is found at asparagine 297 and asparagine 302. Asparagine 456 provides a ligand contact to substrate. The active-site Proton donor is glutamate 457. 3 cysteine pairs are disulfide-bonded: cysteine 540/cysteine 629, cysteine 732/cysteine 761, and cysteine 764/cysteine 769. The active-site Nucleophile is the glutamate 554. N-linked (GlcNAc...) asparagine glycosylation occurs at asparagine 607. Asparagine 803 carries N-linked (GlcNAc...) asparagine glycosylation.

The protein belongs to the glycosyl hydrolase 2 family. Monomer. The N-terminus is blocked. In terms of processing, N-glycosylated. Detected in kidney (at protein level). Highest expression is found in thyroid tissue. The amount of transcript is significantly higher in normal tissues than in tissues affected by the disease.

It is found in the lysosome. The enzyme catalyses Hydrolysis of terminal, non-reducing beta-D-mannose residues in beta-D-mannosides.. Its pathway is glycan metabolism; N-glycan degradation. Exoglycosidase that cleaves the single beta-linked mannose residue from the non-reducing end of all N-linked glycoprotein oligosaccharides. The chain is Beta-mannosidase (MANBA) from Bos taurus (Bovine).